The following is a 770-amino-acid chain: MLPSLALLLLAAWTVRALEVPTDGNAGLLAEPQIAMFCGKLNMHMNVQNGKWESDPSGTKTCIGTKEGILQYCQEVYPELQITNVVEANQPVTIQNWCKRGRKQCKTHTHIVIPYRCLVGEFVSDALLVPDKCKFLHQERMDVCETHLHWHTVAKETCSEKSTNLHDYGMLLPCGIDKFRGVEFVCCPLAEESDSIDSADAEEDDSDVWWGGADTDYADGGEDKVVEVAEEEEVADVEEEEAEDDEDVEDGDEVEEEAEEPYEEATERTTSIATTTTTTTESVEEVVREVCSEQAETGPCRAMISRWYFDVTEGKCAPFFYGGCGGNRNNFDTEEYCMAVCGSVSSQSLLKTTSEPLPQDPVKLPTTAASTPDAVDKYLETPGDENEHAHFQKAKERLEAKHRERMSQVMREWEEAERQAKNLPKADKKAVIQHFQEKVESLEQEAANERQQLVETHMARVEAMLNDRRRLALENYITALQAVPPRPHHVFNMLKKYVRAEQKDRQHTLKHFEHVRMVDPKKAAQIRSQVMTHLRVIYERMNQSLSLLYNVPAVAEEIQDEVDELLQKEQNYSDDVLANMISEPRISYGNDALMPSLTETKTTVELLPVNGEFSLDDLQPWHPFGVDSVPANTENEVEPVDARPAADRGLTTRPGSGLTNIKTEEISEVKMDAEFGHDSGFEVRHQKLVFFAEDVGSNKGAIIGLMVGGVVIATVIVITLVMLKKKQYTSIHHGVVEVDAAVTPEERHLSKMQQNGYENPTYKFFEQMQN.

The N-terminal stretch at 1-17 (MLPSLALLLLAAWTVRA) is a signal peptide. Residues 18 to 701 (LEVPTDGNAG…AEDVGSNKGA (684 aa)) are Extracellular-facing. The GFLD subdomain stretch occupies residues 28–123 (LLAEPQIAMF…PYRCLVGEFV (96 aa)). In terms of domain architecture, E1 spans 28–189 (LLAEPQIAMF…RGVEFVCCPL (162 aa)). Disulfide bonds link cysteine 38–cysteine 62, cysteine 73–cysteine 117, cysteine 98–cysteine 105, cysteine 133–cysteine 187, cysteine 144–cysteine 174, and cysteine 158–cysteine 186. Residue 96-110 (NWCKRGRKQCKTHTH) coordinates heparin. A cuBD subdomain region spans residues 131–189 (DKCKFLHQERMDVCETHLHWHTVAKETCSEKSTNLHDYGMLLPCGIDKFRGVEFVCCPL). Residues 135 to 155 (FLHQERMDVCETHLHWHTVAK) form a copper-binding region. Histidine 147, histidine 151, and tyrosine 168 together coordinate Cu(2+). Residues 181-188 (GVEFVCCP) are zinc-binding. 3 residues coordinate Zn(2+): glutamate 183, cysteine 186, and cysteine 187. A compositionally biased stretch (acidic residues) spans 196-207 (IDSADAEEDDSD). The tract at residues 196–283 (IDSADAEEDD…TTTTTTTESV (88 aa)) is disordered. Serine 198 carries the post-translational modification Phosphoserine; by CK2. Serine 206 is modified (phosphoserine; by CK1). A sulfotyrosine mark is found at tyrosine 217 and tyrosine 262. A compositionally biased stretch (acidic residues) spans 228–264 (VAEEEEVADVEEEEAEDDEDVEDGDEVEEEAEEPYEE). Positions 268–281 (RTTSIATTTTTTTE) are enriched in low complexity. Disulfide bonds link cysteine 291–cysteine 341, cysteine 300–cysteine 324, and cysteine 316–cysteine 337. A BPTI/Kunitz inhibitor domain is found at 291 to 341 (CSEQAETGPCRAMISRWYFDVTEGKCAPFFYGGCGGNRNNFDTEEYCMAVC). The residue at position 336 (tyrosine 336) is a Sulfotyrosine. Residues 344–365 (VSSQSLLKTTSEPLPQDPVKLP) carry the OX-2 motif. The 192-residue stretch at 374-565 (AVDKYLETPG…EEIQDEVDEL (192 aa)) folds into the E2 domain. Residues 391 to 423 (FQKAKERLEAKHRERMSQVMREWEEAERQAKNL) form a heparin-binding region. Serine 441 is modified (phosphoserine). The segment at 491–522 (FNMLKKYVRAEQKDRQHTLKHFEHVRMVDPKK) is heparin-binding. A Phosphotyrosine modification is found at tyrosine 497. The interval 523–540 (AAQIRSQVMTHLRVIYER) is collagen-binding. N-linked (GlcNAc...) asparagine glycosylation is found at asparagine 542 and asparagine 571. Serine 656 is a glycosylation site (O-linked (Xyl...) (chondroitin sulfate) serine; in L-APP isoforms). Positions 677 and 685 each coordinate Cu(2+). Residues histidine 677 and histidine 685 each contribute to the Zn(2+) site. The interval 695–722 (VGSNKGAIIGLMVGGVVIATVIVITLVM) is interaction with PSEN1. A helical transmembrane segment spans residues 702–722 (IIGLMVGGVVIATVIVITLVM). The Cytoplasmic portion of the chain corresponds to 723–770 (LKKKQYTSIHHGVVEVDAAVTPEERHLSKMQQNGYENPTYKFFEQMQN). The Basolateral sorting signal signature appears at 724 to 734 (KKKQYTSIHHG). Threonine 729 is modified (phosphothreonine). Serine 730 carries the post-translational modification Phosphoserine; by APP-kinase I. Residues 732-751 (HHGVVEVDAAVTPEERHLSK) are interaction with G(o)-alpha. The residue at position 743 (threonine 743) is a Phosphothreonine; by CDK5 and MAPK10. Positions 756-770 (GYENPTYKFFEQMQN) are required for the interaction with KIF5B and for anterograde transport in axons. Tyrosine 757 is subject to Phosphotyrosine; by ABL1. The YENPXY motif; contains endocytosis signal signature appears at 757-762 (YENPTY). A Glycyl lysine isopeptide (Lys-Gly) (interchain with G-Cter in ubiquitin) cross-link involves residue lysine 763.

This sequence belongs to the APP family. As to quaternary structure, binds, via its C-terminus, to the PID domain of several cytoplasmic proteins, including APBB family members, the APBA family, MAPK8IP1, SHC1 and NUMB and DAB1. Binding to DAB1 inhibits its serine phosphorylation. Interacts (via NPXY motif) with DAB2 (via PID domain); the interaction is impaired by tyrosine phosphorylation of the NPXY motif. Also interacts with GPCR-like protein BPP, APPBP1, IB1, KNS2 (via its TPR domains), APPBP2 (via BaSS) and DDB1. In vitro, it binds MAPT via the MT-binding domains. Associates with microtubules in the presence of ATP and in a kinesin-dependent manner. Interacts, through a C-terminal domain, with GNAO1. Amyloid-beta protein 42 binds CHRNA7 in hippocampal neurons. Amyloid-beta associates with HADH2. Interacts with CPEB1, ANKS1B and AGER. Interacts with ITM2B. Interacts with ITM2C. Interacts with IDE. Can form homodimers; dimerization is enhanced in the presence of Cu(2+) ions. Can form homodimers; this is promoted by heparin binding. Amyloid-beta protein 40 interacts with S100A9. CTF-alpha product of APP interacts with GSAP. Isoform APP695 interacts with SORL1 (via N-terminal ectodomain); this interaction retains APP in the trans-Golgi network and reduces processing into soluble APP-alpha and amyloid-beta peptides. The C99 fragment also interacts with SORL1. Isoform APP751 interacts with SORL1. Isoform APP770 interacts with SORL1. Interacts with PLD3. Interacts with VDAC1. Interacts with NSG1; could regulate APP processing. Amyloid-beta protein 42 interacts with FPR2. Interacts with SYT7. Interacts (via transmembrane region) with PSEN1; the interaction is direct. Interacts with LRRK2. Interacts (via cytoplasmic domain) with KIF5B. Interacts (via C-terminus) with APBB2/FE65L1 (via C-terminus). Interacts (via intracellular domain) with APBB3. Post-translationally, proteolytically processed under normal cellular conditions. Cleavage either by alpha-secretase, beta-secretase or theta-secretase leads to generation and extracellular release of soluble APP peptides, S-APP-alpha and S-APP-beta, and the retention of corresponding membrane-anchored C-terminal fragments, C80, C83 and C99. Subsequent processing of C80 and C83 by gamma-secretase yields P3 peptides. This is the major secretory pathway and is non-amyloidogenic. Alternatively, presenilin/nicastrin-mediated gamma-secretase processing of C99 releases the amyloid-beta proteins, amyloid-beta protein 40 and amyloid-beta protein 42, major components of amyloid plaques, and the cytotoxic C-terminal fragments, gamma-CTF(50), gamma-CTF(57) and gamma-CTF(59). PSEN1 cleavage is more efficient with C83 than with C99 as substrate (in vitro). Amyloid-beta protein 40 and Amyloid-beta protein 42 are cleaved by ACE. Many other minor amyloid-beta peptides, amyloid-beta 1-X peptides, are found in cerebral spinal fluid (CSF) including the amyloid-beta X-15 peptides, produced from the cleavage by alpha-secretase. In terms of processing, proteolytically cleaved by caspases during neuronal apoptosis. Cleavage at Asp-739 by either caspase-3, -8 or -9 results in the production of the neurotoxic C31 peptide and the increased production of amyloid-beta peptides. N-glycosylated. Post-translationally, O-glycosylated. O-linkage of chondroitin sulfate to the L-APP isoforms produces the APP proteoglycan core proteins, the appicans. The chondroitin sulfate chain of appicans contains 4-O-sulfated galactose in the linkage region and chondroitin sulfate E in the repeated disaccharide region. In terms of processing, phosphorylation in the C-terminal on tyrosine, threonine and serine residues is neuron-specific. Phosphorylation can affect APP processing, neuronal differentiation and interaction with other proteins. Phosphorylated on Thr-743 in neuronal cells by Cdc5 kinase and Mapk10, in dividing cells by Cdc2 kinase in a cell-cycle dependent manner with maximal levels at the G2/M phase and, in vitro, by GSK-3-beta. The Thr-743 phosphorylated form causes a conformational change which reduces binding of Fe65 family members. In dopaminergic (DA) neurons, phosphorylation on Thr-743 by LRKK2 promotes the production and the nuclear translocation of the APP intracellular domain (AICD) which induces DA neuron apoptosis. Phosphorylation on Tyr-757 is required for SHC binding. Phosphorylated in the extracellular domain by casein kinases on both soluble and membrane-bound APP. This phosphorylation is inhibited by heparin. Extracellular binding and reduction of copper, results in a corresponding oxidation of Cys-144 and Cys-158, and the formation of a disulfide bond. Post-translationally, trophic-factor deprivation triggers the cleavage of surface APP by beta-secretase to release sAPP-beta which is further cleaved to release an N-terminal fragment of APP (N-APP). In terms of processing, amyloid-beta peptides are degraded by IDE. Sulfated on tyrosine residues. As to expression, expressed in the brain. In the brain, non-L-APP isoforms are expressed in neurons, isoform APP695 being the predominant form. In astrocytes and microglial cells, almost 50% is L-isoform (appican).

Its subcellular location is the cell membrane. It is found in the membrane. The protein localises to the perikaryon. The protein resides in the cell projection. It localises to the growth cone. Its subcellular location is the clathrin-coated pit. It is found in the early endosome. The protein localises to the cytoplasmic vesicle. The protein resides in the endoplasmic reticulum. It localises to the golgi apparatus. Its subcellular location is the cell surface. It is found in the nucleus. The protein localises to the cytoplasm. The protein resides in the secreted. Functionally, functions as a cell surface receptor and performs physiological functions on the surface of neurons relevant to neurite growth, neuronal adhesion and axonogenesis. Interaction between APP molecules on neighboring cells promotes synaptogenesis. Involved in cell mobility and transcription regulation through protein-protein interactions. Can promote transcription activation through binding to APBB1-KAT5 and inhibit Notch signaling through interaction with Numb. Couples to apoptosis-inducing pathways such as those mediated by G(o) and JIP. Inhibits G(o)-alpha ATPase activity. Acts as a kinesin I membrane receptor, mediating the axonal transport of beta-secretase and presenilin 1. By acting as a kinesin I membrane receptor, plays a role in axonal anterograde transport of cargo towards synapses in axons. May be involved in copper homeostasis/oxidative stress through copper ion reduction. Can regulate neurite outgrowth through binding to components of the extracellular matrix such as heparin and collagen I and IV. The splice isoforms that contain the BPTI domain possess protease inhibitor activity. Induces a AGER-dependent pathway that involves activation of p38 MAPK, resulting in internalization of amyloid-beta peptide and leading to mitochondrial dysfunction in cultured mitochondrial dysfunction in cultured cortical neurons. Provides Cu(2+) ions for GPC1 which are required for release of nitric oxide (NO) and subsequent degradation of the heparan sulfate chains on GPC1. In terms of biological role, amyloid-beta peptides are lipophilic metal chelators with metal-reducing activity. Binds transient metals such as copper, zinc and iron. Rat and mouse amyloid-beta peptides bind only weakly transient metals and have little reducing activity due to substitutions of transient metal chelating residues. Amyloid-beta protein 42 may activate mononuclear phagocytes in the brain and elicits inflammatory responses. Promotes both tau aggregation and TPK II-mediated phosphorylation. Also binds GPC1 in lipid rafts. Appicans elicit adhesion of neural cells to the extracellular matrix and may regulate neurite outgrowth in the brain. Its function is as follows. The gamma-CTF peptides as well as the caspase-cleaved peptides, including C31, are potent enhancers of neuronal apoptosis. This is Amyloid-beta precursor protein from Rattus norvegicus (Rat).